The primary structure comprises 208 residues: MAKLLHLSCSPRPDSESSAGARVFLDGFRQMRPDWDIDVMDLWRERMPEFAGPIVEAKYARMKAEAFDDAQRDSFAEAERMATRLSLAERVLISTPMWNFGIPYKLKQWFDIIVQPGLTFRYDPASGYLPLLKDRPTLVILASGSDFVTGMNRGRTDMATPYLREALRFIGISDVRFVPIGPTTGPADPILAARETAYRRLREIATWF.

FMN is bound by residues Ser10, 15–17 (SES), and 97–100 (MWNF).

It belongs to the azoreductase type 1 family. As to quaternary structure, homodimer. FMN is required as a cofactor.

The catalysed reaction is 2 a quinone + NADH + H(+) = 2 a 1,4-benzosemiquinone + NAD(+). The enzyme catalyses N,N-dimethyl-1,4-phenylenediamine + anthranilate + 2 NAD(+) = 2-(4-dimethylaminophenyl)diazenylbenzoate + 2 NADH + 2 H(+). Its function is as follows. Quinone reductase that provides resistance to thiol-specific stress caused by electrophilic quinones. Functionally, also exhibits azoreductase activity. Catalyzes the reductive cleavage of the azo bond in aromatic azo compounds to the corresponding amines. This Bradyrhizobium diazoefficiens (strain JCM 10833 / BCRC 13528 / IAM 13628 / NBRC 14792 / USDA 110) protein is FMN-dependent NADH:quinone oxidoreductase 1.